The chain runs to 300 residues: Estradiol 17-beta-dehydrogenase 11 (300 aa).

Residues 1–19 (MKFLLDILLLLPLLIVCSL) form the signal peptide. 40–64 (LITGAGHGIGRLTAYEFAKLKSKLV) is a binding site for NADP(+). Serine 172 is a substrate binding site. Residue tyrosine 185 is the Proton acceptor of the active site.

The protein belongs to the short-chain dehydrogenases/reductases (SDR) family. 17-beta-HSD 3 subfamily. As to expression, present at high level in steroidogenic cells such as syncytiotrophoblasts, sebaceous gland, Leydig cells, and granulosa cells of the dominant follicle and corpus luteum. In lung, it is detected in the ciliated epithelium and in acini of adult trachea, in bronchioles, but not in alveoli. In the eye, it is detected in the nonpigmented epithelium of the ciliary body and, at lower level, in the inner nuclear layer of the retina (at protein level). Widely expressed. Highly expressed in retina, pancreas, kidney, liver, lung, adrenal, small intestine, ovary and heart.

It is found in the endoplasmic reticulum. Its subcellular location is the lipid droplet. It catalyses the reaction 17beta-estradiol + NAD(+) = estrone + NADH + H(+). It carries out the reaction 17beta-estradiol + NADP(+) = estrone + NADPH + H(+). In terms of biological role, can convert androstan-3-alpha,17-beta-diol (3-alpha-diol) to androsterone in vitro, suggesting that it may participate in androgen metabolism during steroidogenesis. May act by metabolizing compounds that stimulate steroid synthesis and/or by generating metabolites that inhibit it. Has no activity toward DHEA (dehydroepiandrosterone), or A-dione (4-androste-3,17-dione), and only a slight activity toward testosterone to A-dione. Tumor-associated antigen in cutaneous T-cell lymphoma. The sequence is that of Estradiol 17-beta-dehydrogenase 11 (HSD17B11) from Homo sapiens (Human).